The chain runs to 258 residues: 5-oxoprolinase subunit A (258 aa).

Belongs to the LamB/PxpA family. In terms of assembly, forms a complex composed of PxpA, PxpB and PxpC.

It catalyses the reaction 5-oxo-L-proline + ATP + 2 H2O = L-glutamate + ADP + phosphate + H(+). Functionally, catalyzes the cleavage of 5-oxoproline to form L-glutamate coupled to the hydrolysis of ATP to ADP and inorganic phosphate. This chain is 5-oxoprolinase subunit A, found in Deinococcus radiodurans (strain ATCC 13939 / DSM 20539 / JCM 16871 / CCUG 27074 / LMG 4051 / NBRC 15346 / NCIMB 9279 / VKM B-1422 / R1).